We begin with the raw amino-acid sequence, 247 residues long: Chymase (247 aa).

The first 17 residues, 1–17 (MCLLSLPLLLFLQYTRA), serve as a signal peptide directing secretion. A propeptide spans 18–21 (KAGE) (activation peptide). The region spanning 22–245 (VIGGTECKPH…YRPWINKILK (224 aa)) is the Peptidase S1 domain. C51 and C67 are disulfide-bonded. The active-site Charge relay system is H66. N103 is a glycosylation site (N-linked (GlcNAc...) asparagine). The active-site Charge relay system is the D110. An N-linked (GlcNAc...) asparagine glycan is attached at N121. Disulfide bonds link C144-C209 and C175-C188. Residue S203 is the Charge relay system of the active site.

This sequence belongs to the peptidase S1 family. Granzyme subfamily.

The protein resides in the secreted. Its subcellular location is the cytoplasmic granule. It carries out the reaction Preferential cleavage: Phe-|-Xaa &gt; Tyr-|-Xaa &gt; Trp-|-Xaa &gt; Leu-|-Xaa.. Major secreted protease of mast cells with suspected roles in vasoactive peptide generation, extracellular matrix degradation, and regulation of gland secretion. The polypeptide is Chymase (Cavia porcellus (Guinea pig)).